Reading from the N-terminus, the 607-residue chain is uncharacterized protein (607 aa).

Disordered regions lie at residues 28–114 (GAER…KLRR) and 142–188 (DQER…NNSS). Residues 35-50 (SSHGSINSRSASPNKA) show a composition bias toward polar residues. 2 stretches are compositionally biased toward basic and acidic residues: residues 90-102 (VNGE…DHDT) and 161-174 (KENK…KDLS). The segment covering 177–188 (SSSSMKKANNSS) has biased composition (low complexity). PHD-type zinc fingers lie at residues 263–312 (NDYC…CKHH) and 406–459 (PILC…HSDH).

This is an uncharacterized protein from Schizosaccharomyces pombe (strain 972 / ATCC 24843) (Fission yeast).